The chain runs to 323 residues: Ribose 1,5-bisphosphate isomerase (323 aa).

Substrate contacts are provided by residues 22–25 (RGAA) and Arg-65. The active-site Proton acceptor is Cys-130. The Proton donor role is filled by Asp-199. Substrate-binding positions include 209–210 (NK) and Lys-235. A Glycyl lysine isopeptide (Lys-Gly) (interchain with G-Cter in SAMP2) cross-link involves residue Lys-210.

Belongs to the eIF-2B alpha/beta/delta subunits family. R15P isomerase subfamily.

The enzyme catalyses alpha-D-ribose 1,5-bisphosphate = D-ribulose 1,5-bisphosphate. Functionally, catalyzes the isomerization of ribose 1,5-bisphosphate (R15P) to ribulose 1,5-bisphosphate (RuBP), the CO(2) acceptor and substrate for RubisCO. Functions in an archaeal AMP degradation pathway, together with AMP phosphorylase and RubisCO. In Haloferax volcanii (strain ATCC 29605 / DSM 3757 / JCM 8879 / NBRC 14742 / NCIMB 2012 / VKM B-1768 / DS2) (Halobacterium volcanii), this protein is Ribose 1,5-bisphosphate isomerase.